A 197-amino-acid chain; its full sequence is Small ribosomal subunit protein uS7 (197 aa).

Belongs to the universal ribosomal protein uS7 family. As to quaternary structure, part of the 30S ribosomal subunit.

Functionally, one of the primary rRNA binding proteins, it binds directly to 16S rRNA where it nucleates assembly of the head domain of the 30S subunit. Is located at the subunit interface close to the decoding center. In Methanopyrus kandleri (strain AV19 / DSM 6324 / JCM 9639 / NBRC 100938), this protein is Small ribosomal subunit protein uS7.